A 267-amino-acid polypeptide reads, in one-letter code: Cilia- and flagella-associated protein 300 (267 aa).

Belongs to the CFAP300 family.

The protein localises to the cytoplasm. Its subcellular location is the cytoskeleton. It is found in the cilium axoneme. Cilium- and flagellum-specific protein that plays a role in axonemal structure organization and motility. May play a role in outer and inner dynein arm assembly. This is Cilia- and flagella-associated protein 300 from Xenopus tropicalis (Western clawed frog).